We begin with the raw amino-acid sequence, 1456 residues long: CLIP-associating protein 1-B (1456 aa).

HEAT repeat units lie at residues 68–87, 88–124, and 163–200; these read LLGMDILSALVTRLQDRFRT, QIGTVLPSLMDRLGDAKDSVRDQDQNLLIKIMEQASN, and LTLSKIVPHICNLLGDPNSQVRDAAINCLVEIYRHVGE. The segment at 237 to 296 is disordered; it reads TDKNFDDEDSVDGNRPSSASSSASSKAPQTARRGVSLGTGRRPGTSSAAPKTGGTAKEGA. A compositionally biased stretch (low complexity) spans 284–296; it reads AAPKTGGTAKEGA. One copy of the HEAT 4 repeat lies at 442–479; that stretch reads THVPRLIPIITSNCTSKSVAVRRRCYEFLDLLLQEWQT. Disordered stretches follow at residues 547–728 and 776–796; these read SIVS…DRFG and GMYSDDDANSDASSACSERSY. Positions 550 to 569 are enriched in low complexity; the sequence is SLPQSDRSSSSSQESLNRPL. Over residues 573–594 the composition is skewed to polar residues; it reads RSPTGSTVSRATSKSTTGSLQR. Low complexity-rich tracts occupy residues 603 to 618, 642 to 656, and 665 to 679; these read AAATSKTKAASGASTA, QSSGSTTSTASTPAD, and VVSQSQPGSRSSSPG. The span at 711-721 shows a compositional bias: polar residues; the sequence is QGCSRETSPSR. Low complexity predominate over residues 785-796; that stretch reads SDASSACSERSY. One copy of the HEAT 5 repeat lies at 930–967; it reads QQFNILMRFIVDQTQTPNLKVKVAILKYIESLARQMDP. Disordered stretches follow at residues 1037–1080 and 1121–1147; these read LKNS…GLSP and VRRDGKKESEMGSCDAGMASPASDLRG. A compositionally biased stretch (low complexity) spans 1038-1050; that stretch reads KNSSNSSMGSPSN. Positions 1062–1074 are enriched in polar residues; it reads SRASPLTSPTNCS. Residues 1121–1130 are compositionally biased toward basic and acidic residues; sequence VRRDGKKESE. HEAT repeat units follow at residues 1260 to 1297 and 1378 to 1415; these read EHFKTILLLLLETLGDKDHAIRALALRVLREILRNQPA and QILPDIIPGLLQGYDNTESSVRKASVFCLVAVYSVIGE.

This sequence belongs to the CLASP family. As to quaternary structure, interacts (via C-terminus) with clip1/clip-170, and cenpe.

The protein localises to the cytoplasm. It is found in the cytoskeleton. It localises to the microtubule organizing center. Its subcellular location is the centrosome. The protein resides in the chromosome. The protein localises to the centromere. It is found in the kinetochore. It localises to the spindle. Its subcellular location is the golgi apparatus. The protein resides in the trans-Golgi network. Microtubule plus-end tracking protein that promotes the stabilization of dynamic microtubules during anaphase. Plays a crucial role in chromatin-induced microtubule formation. May also act at microtubule minus ends. May be involved in the nucleation of noncentrosomal microtubules originating from the trans-Golgi network (TGN). This is CLIP-associating protein 1-B from Xenopus laevis (African clawed frog).